Reading from the N-terminus, the 106-residue chain is Large ribosomal subunit protein uL24 (106 aa).

The protein belongs to the universal ribosomal protein uL24 family. In terms of assembly, part of the 50S ribosomal subunit.

In terms of biological role, one of two assembly initiator proteins, it binds directly to the 5'-end of the 23S rRNA, where it nucleates assembly of the 50S subunit. Functionally, one of the proteins that surrounds the polypeptide exit tunnel on the outside of the subunit. The protein is Large ribosomal subunit protein uL24 of Acinetobacter baylyi (strain ATCC 33305 / BD413 / ADP1).